Reading from the N-terminus, the 42-residue chain is MKGLPKFLSLGPVLLVLWLSVQATLLIVINIIYPDLLFYPLS.

Residues 7-27 traverse the membrane as a helical segment; sequence FLSLGPVLLVLWLSVQATLLI.

Belongs to the PsaJ family.

Its subcellular location is the cellular thylakoid membrane. Functionally, may help in the organization of the PsaE and PsaF subunits. This chain is Photosystem I reaction center subunit IX, found in Gloeothece citriformis (strain PCC 7424) (Cyanothece sp. (strain PCC 7424)).